The following is a 209-amino-acid chain: Putative BTB/POZ domain-containing protein At2g40450 (209 aa).

The 75-residue stretch at 24–98 folds into the BTB domain; the sequence is ADVRLKAGDS…IYRVDGSICS (75 aa).

It functions in the pathway protein modification; protein ubiquitination. Its function is as follows. May act as a substrate-specific adapter of an E3 ubiquitin-protein ligase complex (CUL3-RBX1-BTB) which mediates the ubiquitination and subsequent proteasomal degradation of target proteins. The chain is Putative BTB/POZ domain-containing protein At2g40450 from Arabidopsis thaliana (Mouse-ear cress).